The primary structure comprises 59 residues: Dendroaspin (59 aa).

4 disulfide bridges follow: Cys3–Cys22, Cys17–Cys37, Cys39–Cys51, and Cys52–Cys57. Residues 43-45 carry the Cell attachment site motif; it reads RGD.

The protein belongs to the three-finger toxin family. Short-chain subfamily. Antiplatelet toxin sub-subfamily. In terms of tissue distribution, expressed by the venom gland.

The protein resides in the secreted. Inhibits ADP-induced platelet aggregation and inhibits the binding of purified platelet fibrinogen receptor alpha-IIb/beta-3 (ITGA2B/ITGB3) to immobilized fibrinogen. Has also been described to inhibit cell adhesion to fibrinogen, fibronectin, laminin and collagen. This chain is Dendroaspin, found in Dendroaspis jamesoni kaimosae (Eastern Jameson's mamba).